A 344-amino-acid chain; its full sequence is Heat-inducible transcription repressor HrcA (344 aa).

Belongs to the HrcA family.

Functionally, negative regulator of class I heat shock genes (grpE-dnaK-dnaJ and groELS operons). Prevents heat-shock induction of these operons. The protein is Heat-inducible transcription repressor HrcA of Corynebacterium aurimucosum (strain ATCC 700975 / DSM 44827 / CIP 107346 / CN-1) (Corynebacterium nigricans).